A 337-amino-acid chain; its full sequence is Mitochondrial metalloendopeptidase OMA1 (337 aa).

The Mitochondrial matrix segment spans residues 1–68 (MFLNKYISNY…QPNPRDKRFQ (68 aa)). A helical membrane pass occupies residues 69–89 (WIFGALIAGGGVYYFTHLEYV). Residues 90–337 (PISNRRRFND…MLQSFKEVHW (248 aa)) are Mitochondrial intermembrane-facing. Residue His195 participates in Zn(2+) binding. Glu196 is a catalytic residue. His199 and Glu250 together coordinate Zn(2+). A disulfide bond links Cys265 and Cys321.

Belongs to the peptidase M48 family. Zn(2+) serves as cofactor.

It is found in the mitochondrion inner membrane. Protease activity is induced in response to various mitochondrial stress. Its function is as follows. Protease that is part of the quality control system in the inner membrane of mitochondria. Cleaves and thereby promotes the turnover of mistranslated or misfolded membrane protein. This is Mitochondrial metalloendopeptidase OMA1 from Schizosaccharomyces pombe (strain 972 / ATCC 24843) (Fission yeast).